The sequence spans 545 residues: Chaperonin GroEL 3 (545 aa).

ATP-binding positions include 29–32 (TLGP), 86–90 (DGTTT), Gly413, 479–481 (DAV), and Asp495. Residues 526–545 (DKQAKAPAGVGPGPGEGFDY) form a disordered region. A compositionally biased stretch (gly residues) spans 535–545 (VGPGPGEGFDY).

The protein belongs to the chaperonin (HSP60) family. In terms of assembly, forms a cylinder of 14 subunits composed of two heptameric rings stacked back-to-back. Interacts with the co-chaperonin GroES.

The protein resides in the cytoplasm. It catalyses the reaction ATP + H2O + a folded polypeptide = ADP + phosphate + an unfolded polypeptide.. Functionally, together with its co-chaperonin GroES, plays an essential role in assisting protein folding. The GroEL-GroES system forms a nano-cage that allows encapsulation of the non-native substrate proteins and provides a physical environment optimized to promote and accelerate protein folding. In Trichormus variabilis (strain ATCC 29413 / PCC 7937) (Anabaena variabilis), this protein is Chaperonin GroEL 3.